We begin with the raw amino-acid sequence, 271 residues long: Aminoglycoside 3'-phosphotransferase (271 aa).

Catalysis depends on Asp-198, which acts as the Proton acceptor.

This sequence belongs to the aminoglycoside phosphotransferase family.

It carries out the reaction kanamycin A + ATP = kanamycin 3'-phosphate + ADP + H(+). Functionally, resistance to kanamycin and structurally-related aminoglycosides, including amikacin. The polypeptide is Aminoglycoside 3'-phosphotransferase (aphA) (Escherichia coli).